The primary structure comprises 337 residues: tRNA N6-adenosine threonylcarbamoyltransferase (337 aa).

Fe cation-binding residues include histidine 111 and histidine 115. Substrate is bound by residues leucine 134–glycine 138, aspartate 167, glycine 180, and asparagine 272. Aspartate 300 is a binding site for Fe cation.

It belongs to the KAE1 / TsaD family. The cofactor is Fe(2+).

The protein resides in the cytoplasm. The catalysed reaction is L-threonylcarbamoyladenylate + adenosine(37) in tRNA = N(6)-L-threonylcarbamoyladenosine(37) in tRNA + AMP + H(+). Required for the formation of a threonylcarbamoyl group on adenosine at position 37 (t(6)A37) in tRNAs that read codons beginning with adenine. Is involved in the transfer of the threonylcarbamoyl moiety of threonylcarbamoyl-AMP (TC-AMP) to the N6 group of A37, together with TsaE and TsaB. TsaD likely plays a direct catalytic role in this reaction. The sequence is that of tRNA N6-adenosine threonylcarbamoyltransferase from Escherichia coli (strain K12 / MC4100 / BW2952).